Here is a 573-residue protein sequence, read N- to C-terminus: N(2)-(2-carboxyethyl)arginine synthase (573 aa).

Tyrosine 271 and aspartate 301 together coordinate substrate. Thiamine diphosphate is bound at residue 410–413 (IGFF). 414 to 415 (RH) lines the substrate pocket. 436–438 (SSF) contributes to the thiamine diphosphate binding site. Aspartate 463 contributes to the Mg(2+) binding site. Thiamine diphosphate-binding positions include 464–465 (GG), 490–495 (NDTNGL), and tyrosine 561. Residues asparagine 490 and threonine 492 each coordinate Mg(2+). Residue leucine 571 participates in substrate binding.

In terms of assembly, homotetramer; dimer of dimers. The cofactor is Mg(2+). Thiamine diphosphate serves as cofactor.

It carries out the reaction D-glyceraldehyde 3-phosphate + L-arginine = N(2)-(2-carboxyethyl)-L-arginine + phosphate + H(+). Its function is as follows. Involved in the biosynthesis of the beta-lactamase inhibitor, clavulanic acid. Catalyzes the thiamine diphosphate (ThDP) dependent condensation of D-glyceraldehyde-3-phosphate (D-G3P) with L-arginine to yield the beta-amino acid, N2-(2-carboxyethyl)arginine (CEA) via a beta-elimination resulting in the formation of an enol which undergoes a second elimination to generate the alpha,beta-unsaturated acryloyl-ThDP. The polypeptide is N(2)-(2-carboxyethyl)arginine synthase (Streptomyces clavuligerus).